The chain runs to 955 residues: uncharacterized protein (955 aa).

In terms of domain architecture, Importin N-terminal spans 23–90 (ANNYLEEFQK…RNSLLQLFLA (68 aa)).

This is an uncharacterized protein from Schizosaccharomyces pombe (strain 972 / ATCC 24843) (Fission yeast).